A 593-amino-acid chain; its full sequence is Transcriptional repressor p66-beta (593 aa).

Serine 17 carries the post-translational modification Phosphoserine. Residues lysine 33, lysine 66, and lysine 97 each participate in a glycyl lysine isopeptide (Lys-Gly) (interchain with G-Cter in SUMO2) cross-link. The tract at residues 62–123 (ELPTKQDGSG…PERGRLTPSP (62 aa)) is disordered. Composition is skewed to basic and acidic residues over residues 74–100 (GYEE…KENI) and 108–118 (SARRSEPERGR). Threonine 120 is modified (phosphothreonine). Serine 122, serine 129, serine 134, and serine 135 each carry phosphoserine. A coiled-coil region spans residues 140–194 (SRMEERLKAANLEMFKGKGIEERQQLIKQLRDELRLEEARLVLLKKLRQSQLQKE). Lysine 147 participates in a covalent cross-link: Glycyl lysine isopeptide (Lys-Gly) (interchain with G-Cter in SUMO2). The segment at 165–195 (LIKQLRDELRLEEARLVLLKKLRQSQLQKEN) is CR1; interaction with MBD2 and MBD3. Residue lysine 199 forms a Glycyl lysine isopeptide (Lys-Gly) (interchain with G-Cter in SUMO2) linkage. Residue serine 208 is modified to Phosphoserine. The disordered stretch occupies residues 213–235 (SPAHVGQQGLSKLPSRPGAQGVE). Lysine 281 is covalently cross-linked (Glycyl lysine isopeptide (Lys-Gly) (interchain with G-Cter in SUMO2)). Phosphoserine is present on residues serine 333, serine 338, and serine 340. A CR2; histone tail-binding region spans residues 340–480 (SAMTDAANSQ…QEQEIEQRLQ (141 aa)). Residues lysine 353, lysine 454, and lysine 467 each participate in a glycyl lysine isopeptide (Lys-Gly) (interchain with G-Cter in SUMO2) cross-link. The GATA-type zinc finger occupies 414–467 (RVEPFVCAQCRTDFTPHWKQEKNGKILCEQCMTSNQKKALKAEHTNRLKNAFVK). Residues 449–482 (QKKALKAEHTNRLKNAFVKALQQEQEIEQRLQQQ) adopt a coiled-coil conformation. Serine 486 is subject to Phosphoserine. Lysine 498 participates in a covalent cross-link: Glycyl lysine isopeptide (Lys-Gly) (interchain with G-Cter in SUMO2).

As to quaternary structure, homooligomer. Component of the nucleosome remodeling and deacetylase (NuRD) repressor complex, composed of core proteins MTA1, MTA2, MTA3, RBBP4, RBBP7, HDAC1, HDAC2, MBD2, MBD3, and peripherally associated proteins CDK2AP1, CDK2AP2, GATAD2A, GATAD2B, CHD3, CHD4 and CHD5. The exact stoichiometry of the NuRD complex is unknown, and some subunits such as MBD2 and MBD3, GATAD2A and GATAD2B, and CHD3, CHD4 and CHD5 define mutually exclusive NuRD complexes. Interacts with MBD2; this is required for the enhancement of MBD2-mediated repression and for targeting to the chromatin. Interacts with MBD3. Component of the MeCP1 histone deacetylase complex. Interacts with histone tails, including that of histones H2A, H2B, H3 and H4. Interacts with ERCC6. Widely expressed.

It localises to the nucleus speckle. The protein localises to the nucleus. Its subcellular location is the chromosome. Its function is as follows. Transcriptional repressor. Acts as a component of the histone deacetylase NuRD complex which participates in the remodeling of chromatin. Enhances MBD2-mediated repression. Efficient repression requires the presence of GATAD2A. Targets MBD3 to discrete loci in the nucleus. May play a role in synapse development. This Homo sapiens (Human) protein is Transcriptional repressor p66-beta (GATAD2B).